The chain runs to 1273 residues: Chitin synthase 7 (1273 aa).

The tract at residues 1–69 is disordered; it reads MPAVERNAPF…LINPSSGGPG (69 aa). The Cytoplasmic portion of the chain corresponds to 1–79; that stretch reads MPAVERNAPF…FSAASRSKHR (79 aa). A helical membrane pass occupies residues 80–100; it reads FSWWTAFSLFVTFWAPSPLLS. Topologically, residues 101-117 are extracellular; it reads SCCGLKDKQSRQAWREK. The chain crosses the membrane as a helical span at residues 118-138; sequence VSLVFIAILLGGFIGFITMGL. Topologically, residues 139–360 are cytoplasmic; the sequence is NAALCPSASS…FISNLVLYCS (222 aa). Residues 361-381 traverse the membrane as a helical segment; that stretch reads LVVILAIVLIRFFMAVWFAWF. The Extracellular portion of the chain corresponds to 382–820; it reads MAGRMSSPPR…LCGTFCFSMQ (439 aa). Asn412 is a glycosylation site (N-linked (GlcNAc...) asparagine). Positions 416–451 are disordered; it reads AAPWANKQRPPPSQPARRRRDSAQSATPSVPDSLSV. 2 N-linked (GlcNAc...) asparagine glycosylation sites follow: Asn667 and Asn796. A helical transmembrane segment spans residues 821-841; the sequence is FVVFMDLLGTAVLPISIALTY. Over 842-857 the chain is Cytoplasmic; sequence TLVVTYCLNPPHSFTE. Residues 858 to 878 form a helical membrane-spanning segment; it reads AIPLMLLVAVIGMPALLILLA. Over 879 to 881 the chain is Extracellular; that stretch reads TRK. A helical membrane pass occupies residues 882-902; that stretch reads VVYVLWMLIYLLALPVWNFVL. The Cytoplasmic segment spans residues 903-1273; it reads PVYSFWHFDD…RGRSYHDRFS (371 aa). Disordered stretches follow at residues 966-1009 and 1126-1273; these read RELE…SVTV and NGGG…DRFS. Over residues 1000 to 1009 the composition is skewed to low complexity; that stretch reads SDSFSDSVTV. Pro residues predominate over residues 1215-1232; sequence QHPPQPSQPPQPPQPAQP. Positions 1233 to 1246 are enriched in low complexity; that stretch reads TRPGGAPAAPPRGA.

It belongs to the chitin synthase family. Class IV subfamily.

Its subcellular location is the cell membrane. It is found in the cytoplasmic vesicle membrane. The enzyme catalyses [(1-&gt;4)-N-acetyl-beta-D-glucosaminyl](n) + UDP-N-acetyl-alpha-D-glucosamine = [(1-&gt;4)-N-acetyl-beta-D-glucosaminyl](n+1) + UDP + H(+). Functionally, polymerizes chitin, a structural polymer of the cell wall and septum, by transferring the sugar moiety of UDP-GlcNAc to the non-reducing end of the growing chitin polymer. The protein is Chitin synthase 7 of Mycosarcoma maydis (Corn smut fungus).